Here is a 289-residue protein sequence, read N- to C-terminus: ATP synthase subunit a (289 aa).

Helical transmembrane passes span 43–63 (AFHVDTLGWSVALGLIFVLLF), 103–123 (VIAPLALTIFVWVFLMNAVDL), 160–180 (FSVFALIIFYSIKVKGLGGFI), 193–213 (IFVQALLIPVNFLLEFVTLIA), 232–252 (VFILIAVMFGSGLLWLSGLGV), and 259–279 (AVFHILIITLQAFIFMMLTIV).

Belongs to the ATPase A chain family. In terms of assembly, F-type ATPases have 2 components, CF(1) - the catalytic core - and CF(0) - the membrane proton channel. CF(1) has five subunits: alpha(3), beta(3), gamma(1), delta(1), epsilon(1). CF(0) has three main subunits: a(1), b(2) and c(9-12). The alpha and beta chains form an alternating ring which encloses part of the gamma chain. CF(1) is attached to CF(0) by a central stalk formed by the gamma and epsilon chains, while a peripheral stalk is formed by the delta and b chains.

It localises to the cell inner membrane. In terms of biological role, key component of the proton channel; it plays a direct role in the translocation of protons across the membrane. The sequence is that of ATP synthase subunit a from Pseudomonas fluorescens (strain Pf0-1).